We begin with the raw amino-acid sequence, 983 residues long: Probable beta-galactosidase C (983 aa).

A signal peptide spans 1 to 23; the sequence is MRIFSFLFLLLLGILTGQGLVSG. Residues Tyr82, Asn127, Ala128, Glu129, and Asn187 each coordinate substrate. The active-site Proton donor is the Glu188. The N-linked (GlcNAc...) asparagine glycan is linked to Asn197. Tyr251 lines the substrate pocket. A disulfide bond links Cys257 and Cys304. Asn276 carries an N-linked (GlcNAc...) asparagine glycan. Glu287 functions as the Nucleophile in the catalytic mechanism. Tyr353 serves as a coordination point for substrate. 10 N-linked (GlcNAc...) asparagine glycosylation sites follow: Asn391, Asn434, Asn466, Asn516, Asn601, Asn676, Asn714, Asn719, Asn758, and Asn804.

This sequence belongs to the glycosyl hydrolase 35 family.

The protein resides in the secreted. It catalyses the reaction Hydrolysis of terminal non-reducing beta-D-galactose residues in beta-D-galactosides.. Cleaves beta-linked terminal galactosyl residues from gangliosides, glycoproteins, and glycosaminoglycans. This Aspergillus fumigatus (strain CBS 144.89 / FGSC A1163 / CEA10) (Neosartorya fumigata) protein is Probable beta-galactosidase C (lacC).